A 60-amino-acid polypeptide reads, in one-letter code: 5-hydroxytryptamine receptor 2B (60 aa).

The Extracellular portion of the chain corresponds to 1–4; the sequence is VLCP. A helical membrane pass occupies residues 5–26; it reads AWLFLDVLFSTASIMHLCAISV. Aspartate 10 and threonine 15 together coordinate ergotamine. The short motif at 27-29 is the DRY motif; important for ligand-induced conformation changes element; the sequence is DRY. The Cytoplasmic segment spans residues 27 to 46; it reads DRYIAIKKPIQANQYNSRAT. The helical transmembrane segment at 47-60 threads the bilayer; the sequence is AFIKITVVWLISIG.

This sequence belongs to the G-protein coupled receptor 1 family. In terms of assembly, interacts (via C-terminus) with MPDZ. Detected in aorta, renal artery, jugular vein, vena cava and femoral vein.

It is found in the cell membrane. It localises to the synapse. The protein resides in the synaptosome. In terms of biological role, G-protein coupled receptor for 5-hydroxytryptamine (serotonin). Also functions as a receptor for various ergot alkaloid derivatives and psychoactive substances. Ligand binding causes a conformation change that triggers signaling via guanine nucleotide-binding proteins (G proteins) and modulates the activity of downstream effectors. HTR2B is coupled to G(q)/G(11) G alpha proteins and activates phospholipase C-beta, releasing diacylglycerol (DAG) and inositol 1,4,5-trisphosphate (IP3) second messengers that modulate the activity of phosphatidylinositol 3-kinase and promote the release of Ca(2+) ions from intracellular stores, respectively. Beta-arrestin family members inhibit signaling via G proteins and mediate activation of alternative signaling pathways. Plays a role in the regulation of dopamine and 5-hydroxytryptamine release, 5-hydroxytryptamine uptake and in the regulation of extracellular dopamine and 5-hydroxytryptamine levels, and thereby affects neural activity. May play a role in the perception of pain. Plays a role in the regulation of behavior, including impulsive behavior. Required for normal proliferation of embryonic cardiac myocytes and normal heart development. Protects cardiomyocytes against apoptosis. Plays a role in the adaptation of pulmonary arteries to chronic hypoxia. Plays a role in vasoconstriction. Required for normal osteoblast function and proliferation, and for maintaining normal bone density. Required for normal proliferation of the interstitial cells of Cajal in the intestine. The sequence is that of 5-hydroxytryptamine receptor 2B (HTR2B) from Sus scrofa (Pig).